A 731-amino-acid polypeptide reads, in one-letter code: RNA-binding protein RMD9-like, mitochondrial (731 aa).

A compositionally biased stretch (polar residues) spans 1 to 10; it reads MIRLAQQTQV. Disordered stretches follow at residues 1 to 29, 77 to 133, and 590 to 630; these read MIRLAQQTQVLKGKPPNQFVPHPTKNSLT, GGNI…GNSI, and QNDR…FNNP. The segment covering 83–100 has biased composition (low complexity); that stretch reads NNNNHLAQNNSNNSNNHH. The span at 101-122 shows a compositional bias: basic residues; it reads NNNRNHHHNNNRNHHQNNHNHS. The residue at position 132 (serine 132) is a Phosphoserine. Positions 598 to 617 are enriched in polar residues; the sequence is SNMNSTQISRTATPSPSLTP.

The protein belongs to the RMD9 family. In terms of assembly, monomer. In terms of processing, phosphorylated. Phosphorylation promotes binding to RNA.

Its subcellular location is the mitochondrion inner membrane. In terms of biological role, may be involved in the processing or stability of mitochondrial mRNAs. This chain is RNA-binding protein RMD9-like, mitochondrial, found in Saccharomyces cerevisiae (strain ATCC 204508 / S288c) (Baker's yeast).